The primary structure comprises 515 residues: 1-pyrroline-5-carboxylate dehydrogenase 2 (515 aa).

Catalysis depends on residues E286 and C320.

This sequence belongs to the aldehyde dehydrogenase family. RocA subfamily.

It catalyses the reaction L-glutamate 5-semialdehyde + NAD(+) + H2O = L-glutamate + NADH + 2 H(+). It functions in the pathway amino-acid degradation; L-proline degradation into L-glutamate; L-glutamate from L-proline: step 2/2. Important for the use of proline as a sole carbon and energy source or a sole nitrogen source. This Bacillus subtilis (strain 168) protein is 1-pyrroline-5-carboxylate dehydrogenase 2.